Here is a 260-residue protein sequence, read N- to C-terminus: HTH-type transcriptional repressor NanR (260 aa).

Residues 1–21 (MSAFDHSSDDTQETIGNSLRR) are disordered. An HTH gntR-type domain is found at 27–95 (KKLSEMVEEE…NGERARVSRP (69 aa)). Residues 55–74 (ERELMAFFNVGRPSVREALA) constitute a DNA-binding region (H-T-H motif).

The protein belongs to the NanR family.

Its function is as follows. Transcriptional repressor that controls expression of the genes required for the catabolism of sialic acids. In Klebsiella aerogenes (strain ATCC 13048 / DSM 30053 / CCUG 1429 / JCM 1235 / KCTC 2190 / NBRC 13534 / NCIMB 10102 / NCTC 10006 / CDC 819-56) (Enterobacter aerogenes), this protein is HTH-type transcriptional repressor NanR.